A 224-amino-acid polypeptide reads, in one-letter code: Beta-casein (224 aa).

The N-terminal stretch at 1 to 15 is a signal peptide; that stretch reads MKVLILACLVALALA. 4 positions are modified to phosphoserine: Ser30, Ser32, Ser33, and Ser34.

This sequence belongs to the beta-casein family. Mammary gland specific. Secreted in milk.

The protein resides in the secreted. Its function is as follows. Important role in determination of the surface properties of the casein micelles. This Bubalus bubalis (Domestic water buffalo) protein is Beta-casein (CSN2).